We begin with the raw amino-acid sequence, 116 residues long: Nicotine metabolites export pump subunit NepA (116 aa).

Helical transmembrane passes span 10–30 (LTIW…TSLL), 42–62 (TVAV…ILKF), 67–87 (IAYA…GVLF), and 92–112 (FSWK…TLNL).

It belongs to the drug/metabolite transporter (DMT) superfamily. Small multidrug resistance (SMR) (TC 2.A.7.1) family. NepA/NepB subfamily. In terms of assembly, the efflux pump is composed of NepA and NepB.

The protein resides in the cell membrane. Its function is as follows. Component of an efflux pump responsible for the transport of nicotine breakdown products, in particular methylamine, out of the cell. This pump apparently serves as a metabolic valve for nicotine catabolites and may protect the bacteria from the potentially toxic side effects of these compounds. The polypeptide is Nicotine metabolites export pump subunit NepA (nepA) (Paenarthrobacter nicotinovorans (Arthrobacter nicotinovorans)).